The primary structure comprises 289 residues: Enoyl-CoA hydratase domain-containing protein 3, mitochondrial (289 aa).

The transit peptide at 1-14 (MLLRGFSELLKCRG) directs the protein to the mitochondrion.

It belongs to the enoyl-CoA hydratase/isomerase family.

The protein localises to the mitochondrion. May play a role in fatty acid biosynthesis and insulin sensitivity. The sequence is that of Enoyl-CoA hydratase domain-containing protein 3, mitochondrial (echdc3) from Danio rerio (Zebrafish).